An 823-amino-acid chain; its full sequence is Semaphorin-4B (823 aa).

Positions 1–30 (MGRASRSAVLRRALLLLLLLLLLRTTTTRA) are cleaved as a signal peptide. Topologically, residues 31 to 703 (LGPRISVPLG…WGADKSYWNE (673 aa)) are extracellular. Residues 34–510 (RISVPLGSEE…SHSGVVQVPV (477 aa)) enclose the Sema domain. N-linked (GlcNAc...) asparagine glycosylation is found at N53, N56, and N83. C107 and C118 are oxidised to a cystine. N129 is a glycosylation site (N-linked (GlcNAc...) asparagine). Cystine bridges form between C136-C145, C273-C386, and C297-C346. 2 N-linked (GlcNAc...) asparagine glycosylation sites follow: N397 and N512. The PSI domain occupies 512–582 (NCSLYPTCGD…RFLVPGKPCK (71 aa)). A disulfide bridge connects residues C513 and C530. N-linked (GlcNAc...) asparagine glycosylation is found at N567, N615, and N680. The Ig-like C2-type domain maps to 589 to 649 (NTVNTLACPL…FQCWSIEEGF (61 aa)). A disulfide bridge links C596 with C642. Residues 704-724 (FLVMCTLFVFAMVLLFLFFLY) traverse the membrane as a helical segment. The Cytoplasmic portion of the chain corresponds to 725–823 (RHRDGMKLFL…LGSEIRDSVV (99 aa)). Residues S779, S780, S804, and S816 each carry the phosphoserine modification.

It belongs to the semaphorin family. Interacts with GIPC PDZ domain.

Its subcellular location is the membrane. Its function is as follows. Inhibits axonal extension by providing local signals to specify territories inaccessible for growing axons. The chain is Semaphorin-4B from Mus musculus (Mouse).